A 99-amino-acid chain; its full sequence is NADH-quinone oxidoreductase subunit K (99 aa).

Transmembrane regions (helical) follow at residues 3 to 23 (PDNY…GVLL), 28 to 48 (IVMF…FVTF), and 59 to 79 (VVAF…LAII).

Belongs to the complex I subunit 4L family. NDH-1 is composed of 14 different subunits. Subunits NuoA, H, J, K, L, M, N constitute the membrane sector of the complex.

The protein resides in the cell membrane. The catalysed reaction is a quinone + NADH + 5 H(+)(in) = a quinol + NAD(+) + 4 H(+)(out). In terms of biological role, NDH-1 shuttles electrons from NADH, via FMN and iron-sulfur (Fe-S) centers, to quinones in the respiratory chain. The immediate electron acceptor for the enzyme in this species is believed to be a menaquinone. Couples the redox reaction to proton translocation (for every two electrons transferred, four hydrogen ions are translocated across the cytoplasmic membrane), and thus conserves the redox energy in a proton gradient. This is NADH-quinone oxidoreductase subunit K from Mycolicibacterium vanbaalenii (strain DSM 7251 / JCM 13017 / BCRC 16820 / KCTC 9966 / NRRL B-24157 / PYR-1) (Mycobacterium vanbaalenii).